A 336-amino-acid polypeptide reads, in one-letter code: Ornithine carbamoyltransferase, catabolic (336 aa).

Residues Ser57–Thr60, Gln84, Arg108, and His135–Gln138 each bind carbamoyl phosphate. L-ornithine contacts are provided by residues Asn168, Asp232, and Ser236–Met237. Carbamoyl phosphate contacts are provided by residues Cys274–Leu275 and Arg321.

The protein belongs to the aspartate/ornithine carbamoyltransferase superfamily. OTCase family.

The protein resides in the cytoplasm. The enzyme catalyses carbamoyl phosphate + L-ornithine = L-citrulline + phosphate + H(+). Its pathway is amino-acid degradation; L-arginine degradation via ADI pathway; carbamoyl phosphate from L-arginine: step 2/2. In terms of biological role, reversibly catalyzes the transfer of the carbamoyl group from carbamoyl phosphate (CP) to the N(epsilon) atom of ornithine (ORN) to produce L-citrulline. This is Ornithine carbamoyltransferase, catabolic from Burkholderia mallei (strain ATCC 23344).